Reading from the N-terminus, the 593-residue chain is Meiosis-specific APC/C activator protein AMA1 (593 aa).

Residues 1-11 show a composition bias toward basic residues; that stretch reads MATPHLYHRYN. Positions 1 to 26 are disordered; sequence MATPHLYHRYNSKSSNKNINSSGNST. Residues 12–25 are compositionally biased toward low complexity; sequence SKSSNKNINSSGNS. Residues 29–35 carry the C-box motif; that stretch reads DRFIPKS. Residues 94 to 109 show a composition bias toward low complexity; the sequence is SSISSSSESQVTRSGS. Residues 94–125 form a disordered region; the sequence is SSISSSSESQVTRSGSARASRNDYSKLTKEQK. Basic and acidic residues predominate over residues 113–125; it reads SRNDYSKLTKEQK. 6 WD repeats span residues 226-264, 271-310, 323-364, 388-427, 432-474, and 525-564; these read RNDF…VSIL, EKRD…HSSN, ESFK…FPIK, AQAQ…KPIK, PHKA…LLDE, and PNPL…EEII.

This sequence belongs to the WD repeat CDC20/Fizzy family. In terms of assembly, interacts with CDC16.

Activator protein that regulates the ubiquitin ligase activity and substrate specificity of the anaphase promoting complex/cyclosome (APC/C). Required for the ubiquitination and subsequent degradation of the B-type cyclin CLB1 by the APC/C complex during meiosis. Required for meiosis I, late meiotic gene expression and spore wall assembly. The polypeptide is Meiosis-specific APC/C activator protein AMA1 (AMA1) (Saccharomyces cerevisiae (strain ATCC 204508 / S288c) (Baker's yeast)).